Here is a 297-residue protein sequence, read N- to C-terminus: Succinate dehydrogenase [ubiquinone] iron-sulfur subunit, mitochondrial (297 aa).

A 2Fe-2S ferredoxin-type domain is found at 47–140 (KKFEIYRWNP…SLKVYPLPHM (94 aa)). The [2Fe-2S] cluster site is built by C100, C105, C108, and C120. A 4Fe-4S ferredoxin-type domain is found at 185–215 (DRSKLDGLYECILCACCSTSCPSYWWNAEKY). C195, C198, and C201 together coordinate [4Fe-4S] cluster. [3Fe-4S] cluster is bound at residue C205. W210 serves as a coordination point for a ubiquinone. Residues C252 and C258 each coordinate [3Fe-4S] cluster. C262 contacts [4Fe-4S] cluster.

The protein belongs to the succinate dehydrogenase/fumarate reductase iron-sulfur protein family. In terms of assembly, component of complex II composed of four subunits: a flavoprotein (FP), an iron-sulfur protein (IP), and a cytochrome b composed of a large and a small subunit. [2Fe-2S] cluster is required as a cofactor. It depends on [3Fe-4S] cluster as a cofactor. [4Fe-4S] cluster serves as cofactor. As to expression, most abundant in the adult thorax and low in abdominal tissues.

The protein localises to the mitochondrion inner membrane. The enzyme catalyses a quinone + succinate = fumarate + a quinol. It participates in carbohydrate metabolism; tricarboxylic acid cycle; fumarate from succinate (eukaryal route): step 1/1. Iron-sulfur protein (IP) subunit of succinate dehydrogenase (SDH) that is involved in complex II of the mitochondrial electron transport chain and is responsible for transferring electrons from succinate to ubiquinone (coenzyme Q). This chain is Succinate dehydrogenase [ubiquinone] iron-sulfur subunit, mitochondrial (SdhB), found in Drosophila melanogaster (Fruit fly).